The following is a 156-amino-acid chain: Large ribosomal subunit protein uL11 (156 aa).

The disordered stretch occupies residues 1–20; sequence MAQSVKTMVEGGKATTGPPI.

This sequence belongs to the universal ribosomal protein uL11 family. In terms of assembly, part of the ribosomal stalk of the 50S ribosomal subunit. Interacts with L10 and the large rRNA to form the base of the stalk. L10 forms an elongated spine to which L12 dimers bind in a sequential fashion forming a multimeric L10(L12)X complex.

Forms part of the ribosomal stalk which helps the ribosome interact with GTP-bound translation factors. This chain is Large ribosomal subunit protein uL11, found in Thermoplasma acidophilum (strain ATCC 25905 / DSM 1728 / JCM 9062 / NBRC 15155 / AMRC-C165).